Here is a 408-residue protein sequence, read N- to C-terminus: S-adenosylmethionine synthase (408 aa).

His15 lines the ATP pocket. Asp17 provides a ligand contact to Mg(2+). Glu43 provides a ligand contact to K(+). L-methionine-binding residues include Glu56 and Gln100. A flexible loop region spans residues 100–110; that stretch reads QSPDIAQGVNE. ATP is bound by residues 171–173, 248–249, Asp257, 263–264, Ala280, and Lys284; these read DGK, KF, and RK. Asp257 contacts L-methionine. Lys288 provides a ligand contact to L-methionine.

Belongs to the AdoMet synthase family. In terms of assembly, homotetramer; dimer of dimers. Mg(2+) serves as cofactor. K(+) is required as a cofactor.

It is found in the cytoplasm. It carries out the reaction L-methionine + ATP + H2O = S-adenosyl-L-methionine + phosphate + diphosphate. It participates in amino-acid biosynthesis; S-adenosyl-L-methionine biosynthesis; S-adenosyl-L-methionine from L-methionine: step 1/1. Functionally, catalyzes the formation of S-adenosylmethionine (AdoMet) from methionine and ATP. The overall synthetic reaction is composed of two sequential steps, AdoMet formation and the subsequent tripolyphosphate hydrolysis which occurs prior to release of AdoMet from the enzyme. The protein is S-adenosylmethionine synthase of Synechococcus sp. (strain CC9902).